The following is a 1836-amino-acid chain: InaD-like protein (1836 aa).

In terms of domain architecture, L27 spans 1–65 (MPENPAAEKM…SIKQLKGQLS (65 aa)). PDZ domains lie at 134-221 (YIDI…AREV), 248-328 (DVEL…ARDP), and 365-453 (NVEL…VRRK). 3 positions are modified to phosphoserine: Ser-455, Ser-459, and Ser-482. The span at 456 to 466 (LSASPFEQPSS) shows a compositional bias: polar residues. The segment at 456 to 492 (LSASPFEQPSSREAVAEPPEVPELTGSLKPETNSRME) is disordered. Positions 555–641 (DEELQKYSKL…PFTLVCCRRL (87 aa)) constitute a PDZ 4 domain. Residue Ser-647 is modified to Phosphoserine. PDZ domains follow at residues 687–773 (TVEL…ICKP) and 1074–1166 (PRIV…VVQS). The span at 1173 to 1191 (VIPSVNNKGKTPPQNQDQN) shows a compositional bias: polar residues. The disordered stretch occupies residues 1173–1232 (VIPSVNNKGKTPPQNQDQNTQEKKAKRHGTAPPPMKLPPPYRAPSADTEESEEDSALTDK). A compositionally biased stretch (pro residues) spans 1203–1214 (APPPMKLPPPYR). Ser-1217 bears the Phosphoserine mark. Over residues 1219–1228 (DTEESEEDSA) the composition is skewed to acidic residues. The PDZ 7 domain occupies 1245–1328 (LHIIELEKDK…PTRVKLVFIR (84 aa)). The segment at 1341 to 1448 (FPVPSHSPSP…ADVTGSGNFQ (108 aa)) is disordered. The span at 1372 to 1383 (PLPERESSKPED) shows a compositional bias: basic and acidic residues. Polar residues-rich tracts occupy residues 1415 to 1426 (YSAQVSSSSQEI) and 1434 to 1448 (CQST…GNFQ). PDZ domains are found at residues 1472 to 1555 (EMII…VIYR) and 1568 to 1650 (VFLV…EIGR). Residue Thr-1545 is modified to Phosphothreonine. Positions 1657 to 1678 (ASSRKTSQNSQGDQHSAHSSCR) are disordered. The PDZ 10 domain occupies 1709-1795 (PRTVEIIREL…FGRIILQVVA (87 aa)). Positions 1813 to 1836 (SQLGSPTADRHPQDPEELLQRTAD) are disordered.

Forms a ternary complex with PALS1 and CRB1. Component of a complex whose core is composed of ARHGAP17, AMOT, PALS1, INADL/PATJ and PARD3/PAR3. Forms a heterotrimeric complex composed of MMP5, LIN7B and PATJ; the N-terminal L27 domain of PALS1 interacts with the L27 domain of PATJ and the C-terminal L27 domain of PALS1 interacts with the L27 domain of LIN7B. Component of a complex composed of CRB3, PALS1 and PATJ. As part of the Crumbs complex; interacts with WWP1, the interaction is enhanced by AMOTL2 and facilitates WWP1 localization to the plasma membrane. The Crumbs complex promotes monoubiquitination of AMOTL2 by WWP1, which activates the Hippo signaling pathway. Interacts (via N-terminus) with PALS1/PALS (via PDZ domain). Interacts with TJP3/ZO-3 and CLDN1/claudin-1. Interacts with ASIC3, KCNJ10, KCNJ15, GRIN2A, GRIN2B, GRIN2C, GRIN2D, NLGN2, and HTR2A. Interacts with MPP7. Directly interacts with HTR4. Interacts (via PDZ domain 8) with WWC1 (via the ADDV motif). Interacts with SLC6A4. Interacts (via C-terminus) with ARHGEF18. Interacts with NPHP1. Interacts with PARD3/PAR3. Interacts (via PDZ1-6 domains) with TJP1/ZO1; the interaction is required for attachment and extension of TJP1/ZO1 condensates along the apical cell interface. Abundantly expressed in germ cells, also expressed in testes and seminiferous tubules, with faint expression in Sertoli cells (at protein level).

It is found in the cell junction. It localises to the tight junction. Its subcellular location is the apical cell membrane. The protein localises to the cytoplasm. The protein resides in the perinuclear region. Functionally, scaffolding protein that facilitates the localization of proteins to the cell membrane. Required for the correct formation of tight junctions and epithelial apico-basal polarity. Acts (via its L27 domain) as an apical connector and elongation factor for multistranded TJP1/ZO1 condensates that form a tight junction belt, thereby required for the formation of the tight junction-mediated cell barrier. Positively regulates epithelial cell microtubule elongation and cell migration, possibly via facilitating localization of PRKCI/aPKC and PAR3D/PAR3 at the leading edge of migrating cells. Plays a role in the correct reorientation of the microtubule-organizing center during epithelial migration. May regulate the surface expression and/or function of ASIC3 in sensory neurons. May recruit ARHGEF18 to apical cell-cell boundaries. The chain is InaD-like protein from Rattus norvegicus (Rat).